A 157-amino-acid polypeptide reads, in one-letter code: Protein-export protein SecB (157 aa).

This sequence belongs to the SecB family. In terms of assembly, homotetramer, a dimer of dimers. One homotetramer interacts with 1 SecA dimer.

The protein localises to the cytoplasm. Functionally, one of the proteins required for the normal export of preproteins out of the cell cytoplasm. It is a molecular chaperone that binds to a subset of precursor proteins, maintaining them in a translocation-competent state. It also specifically binds to its receptor SecA. In Shewanella frigidimarina (strain NCIMB 400), this protein is Protein-export protein SecB.